A 412-amino-acid polypeptide reads, in one-letter code: Transforming growth factor beta-3 proprotein (412 aa).

Positions 1 to 23 are cleaved as a signal peptide; sequence MKMHLQRALVVLALLNLATVSLS. Asparagine 74, asparagine 135, and asparagine 142 each carry an N-linked (GlcNAc...) asparagine glycan. The Cell attachment site motif lies at 261–263; it reads RGD. Position 293 is an N5-methylglutamine (glutamine 293). Cystine bridges form between cysteine 307/cysteine 316, cysteine 315/cysteine 378, cysteine 344/cysteine 409, and cysteine 348/cysteine 411.

This sequence belongs to the TGF-beta family. In terms of assembly, interacts with ASPN. Latency-associated peptide: Homodimer; disulfide-linked. Latency-associated peptide: Interacts with Transforming growth factor beta-3 (TGF-beta-3) chain; interaction is non-covalent and maintains (TGF-beta-3) in a latent state. Latency-associated peptide: Interacts with LRRC32/GARP; leading to regulate activation of TGF-beta-3 and promote epithelial fusion during palate development. Latency-associated peptide: Interacts (via cell attachment site) with integrins, leading to release of the active TGF-beta-3. Transforming growth factor beta-3: Homodimer; disulfide-linked. Transforming growth factor beta-3: Interacts with TGF-beta receptors (TGFBR1 and TGFBR2), leading to signal transduction. Transforming growth factor beta-3 proprotein: The precursor proprotein is cleaved in the Golgi apparatus to form Transforming growth factor beta-3 (TGF-beta-3) and Latency-associated peptide (LAP) chains, which remain non-covalently linked, rendering TGF-beta-3 inactive. In terms of processing, methylated at Gln-293 by N6AMT1. Expressed in cardiomyocytes.

The protein localises to the secreted. Its subcellular location is the extracellular space. The protein resides in the extracellular matrix. In terms of biological role, transforming growth factor beta-3 proprotein: Precursor of the Latency-associated peptide (LAP) and Transforming growth factor beta-3 (TGF-beta-3) chains, which constitute the regulatory and active subunit of TGF-beta-3, respectively. Its function is as follows. Required to maintain the Transforming growth factor beta-3 (TGF-beta-3) chain in a latent state during storage in extracellular matrix. Associates non-covalently with TGF-beta-3 and regulates its activation via interaction with 'milieu molecules', such as LTBP1 and LRRC32/GARP, that control activation of TGF-beta-3. Interaction with integrins results in distortion of the Latency-associated peptide chain and subsequent release of the active TGF-beta-3. Functionally, transforming growth factor beta-3: Multifunctional protein that regulates embryogenesis and cell differentiation and is required in various processes such as secondary palate development. Activation into mature form follows different steps: following cleavage of the proprotein in the Golgi apparatus, Latency-associated peptide (LAP) and Transforming growth factor beta-3 (TGF-beta-3) chains remain non-covalently linked rendering TGF-beta-3 inactive during storage in extracellular matrix. At the same time, LAP chain interacts with 'milieu molecules', such as LTBP1 and LRRC32/GARP that control activation of TGF-beta-3 and maintain it in a latent state during storage in extracellular milieus. TGF-beta-3 is released from LAP by integrins: integrin-binding results in distortion of the LAP chain and subsequent release of the active TGF-beta-3. Once activated following release of LAP, TGF-beta-3 acts by binding to TGF-beta receptors (TGFBR1 and TGFBR2), which transduce signal. This Rattus norvegicus (Rat) protein is Transforming growth factor beta-3 proprotein (Tgfb3).